The sequence spans 333 residues: Replication factor C subunit 2 (333 aa).

Ala2 is subject to N-acetylalanine. 55-62 contacts ATP; sequence GPPGTGKT.

This sequence belongs to the activator 1 small subunits family. In terms of assembly, heterotetramer of subunits RFC2, RFC3, RFC4 and RFC5 that can form a complex with RFC1.

The protein localises to the nucleus. In terms of biological role, may be involved in DNA replication and thus regulate cell proliferation. The protein is Replication factor C subunit 2 (RFC2) of Arabidopsis thaliana (Mouse-ear cress).